The sequence spans 205 residues: LexA repressor (205 aa).

A DNA-binding region (H-T-H motif) is located at residues 28 to 48; the sequence is RAELMRAFDFRSPNAAESHLR. Residues serine 120 and lysine 159 each act as for autocatalytic cleavage activity in the active site.

It belongs to the peptidase S24 family. As to quaternary structure, homodimer.

The enzyme catalyses Hydrolysis of Ala-|-Gly bond in repressor LexA.. In terms of biological role, represses a number of genes involved in the response to DNA damage (SOS response), including recA and lexA. In the presence of single-stranded DNA, RecA interacts with LexA causing an autocatalytic cleavage which disrupts the DNA-binding part of LexA, leading to derepression of the SOS regulon and eventually DNA repair. The sequence is that of LexA repressor from Acidithiobacillus ferrooxidans (strain ATCC 23270 / DSM 14882 / CIP 104768 / NCIMB 8455) (Ferrobacillus ferrooxidans (strain ATCC 23270)).